Here is a 571-residue protein sequence, read N- to C-terminus: Urease subunit alpha (571 aa).

The Urease domain maps to 132-571 (GGIDSHIHFI…LPMAQRYFLF (440 aa)). H137, H139, and K220 together coordinate Ni(2+). K220 is subject to N6-carboxylysine. H222 is a binding site for substrate. H249 and H275 together coordinate Ni(2+). H323 functions as the Proton donor in the catalytic mechanism. D363 provides a ligand contact to Ni(2+).

This sequence belongs to the metallo-dependent hydrolases superfamily. Urease alpha subunit family. As to quaternary structure, heterotrimer of UreA (gamma), UreB (beta) and UreC (alpha) subunits. Three heterotrimers associate to form the active enzyme. Requires Ni cation as cofactor. In terms of processing, carboxylation allows a single lysine to coordinate two nickel ions.

The protein localises to the cytoplasm. The enzyme catalyses urea + 2 H2O + H(+) = hydrogencarbonate + 2 NH4(+). It functions in the pathway nitrogen metabolism; urea degradation; CO(2) and NH(3) from urea (urease route): step 1/1. This chain is Urease subunit alpha, found in Kocuria rhizophila (strain ATCC 9341 / DSM 348 / NBRC 103217 / DC2201).